We begin with the raw amino-acid sequence, 55 residues long: Cytochrome c oxidase subunit 7s (55 aa).

The helical transmembrane segment at 13 to 35 threads the bilayer; that stretch reads LVQDIGVALILGSIAGCFFKYGV.

In terms of assembly, slime mold cytochrome c oxidase consists of at least seven different polypeptides species, subunits I, II, III, IV, V, VI, and VIIe/s in order of MW.

It is found in the mitochondrion inner membrane. It catalyses the reaction 4 Fe(II)-[cytochrome c] + O2 + 8 H(+)(in) = 4 Fe(III)-[cytochrome c] + 2 H2O + 4 H(+)(out). Functionally, this protein is one of the nuclear-coded polypeptide chains of cytochrome c oxidase, the terminal oxidase in mitochondrial electron transport. This is Cytochrome c oxidase subunit 7s (cxgS) from Dictyostelium discoideum (Social amoeba).